The following is a 129-amino-acid chain: Small ribosomal subunit protein eS6 (129 aa).

The protein belongs to the eukaryotic ribosomal protein eS6 family.

The protein is Small ribosomal subunit protein eS6 of Archaeoglobus fulgidus (strain ATCC 49558 / DSM 4304 / JCM 9628 / NBRC 100126 / VC-16).